The primary structure comprises 88 residues: MKTVFAILFLTFIAFTYAKSYEDVKEEIKNEVEREIFEDLEEESDVLDSNVRELNDAKPWRFRRAIRSIRWRKVGPYVPIIVKMAGKK.

An N-terminal signal peptide occupies residues 1 to 18; sequence MKTVFAILFLTFIAFTYA. A propeptide spanning residues 19-57 is cleaved from the precursor; that stretch reads KSYEDVKEEIKNEVEREIFEDLEEESDVLDSNVRELNDA. Position 85 is an alanine amide (alanine 85).

It belongs to the arminin family. Expressed in entodermal epithelium along the body column.

It is found in the secreted. The protein localises to the target cell membrane. In terms of biological role, antimicrobial peptide with a broad-spectrum antimicrobial activity. Keeps its antibacterial activity under a wide range of salt concentrations that mimic physiological conditions of human blood, which is surprising, since Hydra is an obligate freshwater animal with nearly no salt tolerance. Does not affect red blood cells. The protein is Arminin 7965 of Hydra vulgaris (Hydra).